The sequence spans 360 residues: Ribosomal RNA large subunit methyltransferase M (360 aa).

S-adenosyl-L-methionine contacts are provided by residues Ser192, Ala225 to Gly228, Asp244, Asp264, and Asp280. Lys309 (proton acceptor) is an active-site residue.

This sequence belongs to the class I-like SAM-binding methyltransferase superfamily. RNA methyltransferase RlmE family. RlmM subfamily. Monomer.

It is found in the cytoplasm. The catalysed reaction is cytidine(2498) in 23S rRNA + S-adenosyl-L-methionine = 2'-O-methylcytidine(2498) in 23S rRNA + S-adenosyl-L-homocysteine + H(+). Catalyzes the 2'-O-methylation at nucleotide C2498 in 23S rRNA. This chain is Ribosomal RNA large subunit methyltransferase M, found in Alkalilimnicola ehrlichii (strain ATCC BAA-1101 / DSM 17681 / MLHE-1).